We begin with the raw amino-acid sequence, 479 residues long: MNFETIIGLEVHAELNTNSKIFSPSSAHFGEDPNANTNVIDWSFPGVLPVMNKGVIDASIKAALALNMDIHKEMHFDRKNYFYPDNPKAYQISQFDEPVGYNGWIEIKLEDGSTKKIRIERAHLEEDAGKNTHGTDGYSYVDLNRQGVPLIEIVSEADMRSPEEAYAYLTALKEIIQYTGISDVKMEEGSMRVDANISLRPYGQEQFGTKTELKNLNSFSNVRKGLEFEVERQAKLLRSGGVIRQETRRYDEANKGTILMRVKEGAADYRYFPEPDLPLYEIDDAWIDEMRAQLPQFPAQRRAKYEEELGLSAYDASQLTATKVLSDFFETAVSLGGDAKQVSNWLQGEIAQFLNAEGKTIEEIALTPENLVEMIAIIADGTISSKMAKKVFVHLAKNGGSARAYVEKAGLVQISDPAVLVPIIHQVFADNEAAVADFKSGKRNADKAFTGFLMKATKGQANPQVAQQLLAQELQKLRD.

This sequence belongs to the GatB/GatE family. GatB subfamily. In terms of assembly, heterotrimer of A, B and C subunits.

The catalysed reaction is L-glutamyl-tRNA(Gln) + L-glutamine + ATP + H2O = L-glutaminyl-tRNA(Gln) + L-glutamate + ADP + phosphate + H(+). The enzyme catalyses L-aspartyl-tRNA(Asn) + L-glutamine + ATP + H2O = L-asparaginyl-tRNA(Asn) + L-glutamate + ADP + phosphate + 2 H(+). Functionally, allows the formation of correctly charged Asn-tRNA(Asn) or Gln-tRNA(Gln) through the transamidation of misacylated Asp-tRNA(Asn) or Glu-tRNA(Gln) in organisms which lack either or both of asparaginyl-tRNA or glutaminyl-tRNA synthetases. The reaction takes place in the presence of glutamine and ATP through an activated phospho-Asp-tRNA(Asn) or phospho-Glu-tRNA(Gln). The chain is Aspartyl/glutamyl-tRNA(Asn/Gln) amidotransferase subunit B from Streptococcus pyogenes serotype M6 (strain ATCC BAA-946 / MGAS10394).